The sequence spans 484 residues: Fumigaclavine B O-acetyltransferase ifgI (484 aa).

This sequence belongs to the fumigaclavine B O-acetyltransferase family. As to quaternary structure, monomer.

The catalysed reaction is fumigaclavine B + acetyl-CoA = fumigaclavine A + CoA. It functions in the pathway alkaloid biosynthesis; ergot alkaloid biosynthesis. Fumigaclavine B O-acetyltransferase; part of the gene cluster that mediates the biosynthesis of isofumigaclavines, fungal ergot alkaloids. The tryptophan dimethylallyltransferase ifgA catalyzes the first step of ergot alkaloid biosynthesis by condensing dimethylallyl diphosphate (DMAP) and tryptophan to form 4-dimethylallyl-L-tryptophan. The second step is catalyzed by the methyltransferase ifgB that methylates 4-dimethylallyl-L-tryptophan in the presence of S-adenosyl-L-methionine, resulting in the formation of N-methyl-dimethylallyl-L-tryptophan. The catalase ifgD and the FAD-dependent oxidoreductase ifgC then transform N-methyl-dimethylallyl-L-tryptophan to chanoclavine-I which is further oxidized by ifgE in the presence of NAD(+), resulting in the formation of chanoclavine-I aldehyde. The chanoclavine-I aldehyde reductases ifgG and/or fgaOx3 reduce chanoclavine-I aldehyde to dihydrochanoclavine-I aldehyde that spontaneously dehydrates to form 6,8-dimethyl-6,7-didehydroergoline. The festuclavine dehydrogenases ifgF1 and/or ifgF2 then catalyze the reduction of 6,8-dimethyl-6,7-didehydroergoline to form festuclavine. Hydrolysis of festuclavine by a yet undetermined cytochrome P450 monooxygenase (called ifgH) then leads to the formation of isofumigaclavine B which is in turn acetylated by ifgI to isofumigaclavine A. Penicillium roqueforti has interestingly at least two sets of genes for the consumption of chanoclavine-I aldehyde on three different loci, the OYEs ifgG/fgaOx3 and the festuclavine synthase homologs ifgF1/ifgF2. The reason for the duplication of these genes is unclear, probably to ensure the conversion of chanoclavine-I aldehyde by differential gene expression under various environmental conditions. In Penicillium roqueforti (strain FM164), this protein is Fumigaclavine B O-acetyltransferase ifgI.